Reading from the N-terminus, the 211-residue chain is Thymidylate kinase (211 aa).

10–17 (GGDGVGKS) contributes to the ATP binding site.

It belongs to the thymidylate kinase family.

It catalyses the reaction dTMP + ATP = dTDP + ADP. In terms of biological role, phosphorylation of dTMP to form dTDP in both de novo and salvage pathways of dTTP synthesis. The sequence is that of Thymidylate kinase from Clavibacter sepedonicus (Clavibacter michiganensis subsp. sepedonicus).